A 378-amino-acid polypeptide reads, in one-letter code: Pseudouridine kinase (378 aa).

Residues Asp-12, Thr-26, Gly-37–Asn-41, Val-38, Asn-137, and Lys-166 each bind pseudouridine. Ser-181 and Thr-237 together coordinate Mg(2+). Residues Thr-237, Gly-239, Gly-242, Thr-298, Leu-306, and Gly-310 each contribute to the ATP site. Asp-311 provides a ligand contact to pseudouridine.

It belongs to the carbohydrate kinase PfkB family. In terms of assembly, forms homodimers.

It is found in the peroxisome. The catalysed reaction is pseudouridine + ATP = psi-UMP + ADP + H(+). Functionally, catalyzes the phosphorylation of pseudouridine to pseudouridine 5'-phosphate (PsiMP). Catalyzes the first step in a pseudouridine degradation pathway. Acts together with the pseudouridine 5'-phosphate glycosidase PUMY in the peroxisome to prevent toxic pseudouridine monophosphate accumulation. The polypeptide is Pseudouridine kinase (Arabidopsis thaliana (Mouse-ear cress)).